The sequence spans 101 residues: Small ribosomal subunit protein uS14 (101 aa).

This sequence belongs to the universal ribosomal protein uS14 family. As to quaternary structure, part of the 30S ribosomal subunit. Contacts proteins S3 and S10.

Functionally, binds 16S rRNA, required for the assembly of 30S particles and may also be responsible for determining the conformation of the 16S rRNA at the A site. The polypeptide is Small ribosomal subunit protein uS14 (Brucella abortus (strain S19)).